We begin with the raw amino-acid sequence, 209 residues long: Transcription factor atf31 (209 aa).

Positions 90-103 (SKSPSIISEASHNS) are enriched in polar residues. The segment at 90–133 (SKSPSIISEASHNSPSRELDDSGDENTSKLTGTKQSMLKARNRQ) is disordered. The region spanning 121–184 (GTKQSMLKAR…IKLRTLVFAH (64 aa)) is the bZIP domain. The interval 123-161 (KQSMLKARNRQAAQKCRIKKKKYLQTLQDQVNYYTSENK) is basic motif. The segment at 163–177 (LLQSANDLREEIIKL) is leucine-zipper.

Belongs to the bZIP family.

Its subcellular location is the nucleus. In Schizosaccharomyces pombe (strain 972 / ATCC 24843) (Fission yeast), this protein is Transcription factor atf31 (atf31).